A 277-amino-acid chain; its full sequence is Urease accessory protein UreD (277 aa).

Belongs to the UreD family. UreD, UreF and UreG form a complex that acts as a GTP-hydrolysis-dependent molecular chaperone, activating the urease apoprotein by helping to assemble the nickel containing metallocenter of UreC. The UreE protein probably delivers the nickel.

The protein localises to the cytoplasm. Functionally, required for maturation of urease via the functional incorporation of the urease nickel metallocenter. The chain is Urease accessory protein UreD from Sinorhizobium medicae (strain WSM419) (Ensifer medicae).